The primary structure comprises 131 residues: Large ribosomal subunit protein bL19 (131 aa).

Belongs to the bacterial ribosomal protein bL19 family.

Functionally, this protein is located at the 30S-50S ribosomal subunit interface and may play a role in the structure and function of the aminoacyl-tRNA binding site. The polypeptide is Large ribosomal subunit protein bL19 (Rhodopseudomonas palustris (strain BisB18)).